We begin with the raw amino-acid sequence, 90 residues long: Acylphosphatase (90 aa).

Residues 5-90 form the Acylphosphatase-like domain; it reads SYLFNVKGKV…WQELTDFKMY (86 aa). Active-site residues include R20 and N38.

It belongs to the acylphosphatase family.

It carries out the reaction an acyl phosphate + H2O = a carboxylate + phosphate + H(+). This is Acylphosphatase (acyP) from Aliivibrio fischeri (strain ATCC 700601 / ES114) (Vibrio fischeri).